Here is a 220-residue protein sequence, read N- to C-terminus: pH-response regulator palI/RIM9 homolog 1 (220 aa).

Topologically, residues 1-5 (MSHFK) are cytoplasmic. Residues 6–26 (IVFLTSLSLALVFELFNTISV) form a helical membrane-spanning segment. The Extracellular segment spans residues 27–89 (PITSHLFISE…NHAKYALSKL (63 aa)). The helical transmembrane segment at 90-110 (LLVHVLSFVCVLVFWLFAILI) threads the bilayer. Over 111-121 (CIKWLNTSKSV) the chain is Cytoplasmic. Residues 122 to 142 (LLFAVGWSMVTFMVSLLGFLI) form a helical membrane-spanning segment. At 143–155 (DVLMFASHVTWSS) the chain is on the extracellular side. A helical transmembrane segment spans residues 156-176 (WLMLVSAFFVALSGILLCLMI). Residues 177–220 (RDLSYRRFVKLQGEVDVCVPMTEPRDPDELNEIWKKKTSKREIL) lie on the Cytoplasmic side of the membrane.

The protein belongs to the palI/RIM9 family.

The protein resides in the cell membrane. Its function is as follows. Required for the proteolytic cleavage of the transcription factor RIM101 in response to alkaline ambient pH. The chain is pH-response regulator palI/RIM9 homolog 1 from Kluyveromyces lactis (strain ATCC 8585 / CBS 2359 / DSM 70799 / NBRC 1267 / NRRL Y-1140 / WM37) (Yeast).